A 420-amino-acid chain; its full sequence is Torsin-4A (420 aa).

A helical transmembrane segment spans residues 130–150 (CLLLFIAIVCFQIFNAIENLD). 202 to 209 (GPSGVGKS) contacts ATP.

Belongs to the ClpA/ClpB family. Torsin subfamily.

It localises to the membrane. This Xenopus tropicalis (Western clawed frog) protein is Torsin-4A (tor4a).